We begin with the raw amino-acid sequence, 159 residues long: Phosphopantetheine adenylyltransferase (159 aa).

Residue Thr-10 participates in substrate binding. ATP contacts are provided by residues 10–11 and His-18; that span reads TF. Residues Lys-42, Met-74, and Arg-88 each coordinate substrate. Residues 89 to 91, Glu-99, and 124 to 130 contribute to the ATP site; these read GLR and WSFISSS.

This sequence belongs to the bacterial CoaD family. As to quaternary structure, homohexamer. Mg(2+) is required as a cofactor.

The protein localises to the cytoplasm. It carries out the reaction (R)-4'-phosphopantetheine + ATP + H(+) = 3'-dephospho-CoA + diphosphate. Its pathway is cofactor biosynthesis; coenzyme A biosynthesis; CoA from (R)-pantothenate: step 4/5. Functionally, reversibly transfers an adenylyl group from ATP to 4'-phosphopantetheine, yielding dephospho-CoA (dPCoA) and pyrophosphate. The polypeptide is Phosphopantetheine adenylyltransferase (Yersinia enterocolitica serotype O:8 / biotype 1B (strain NCTC 13174 / 8081)).